The primary structure comprises 120 residues: Sirohydrochlorin cobaltochelatase (120 aa).

Histidine 9 (proton acceptor) is an active-site residue. Residue histidine 9 participates in Co(2+) binding. Substrate is bound by residues glutamine 43 and 68-73 (FAAGTH). Position 73 (histidine 73) interacts with Co(2+).

The protein belongs to the CbiX family. CbiXS subfamily. In terms of assembly, homotetramer; dimer of dimers.

It catalyses the reaction Co-sirohydrochlorin + 2 H(+) = sirohydrochlorin + Co(2+). It functions in the pathway cofactor biosynthesis; adenosylcobalamin biosynthesis; cob(II)yrinate a,c-diamide from sirohydrochlorin (anaerobic route): step 1/10. Its function is as follows. Catalyzes the insertion of Co(2+) into sirohydrochlorin as part of the anaerobic pathway to cobalamin biosynthesis. The polypeptide is Sirohydrochlorin cobaltochelatase (Sulfurisphaera tokodaii (strain DSM 16993 / JCM 10545 / NBRC 100140 / 7) (Sulfolobus tokodaii)).